We begin with the raw amino-acid sequence, 280 residues long: Large ribosomal subunit protein uL2 (280 aa).

Disordered stretches follow at residues 33 to 55 and 224 to 266; these read LTEGLTKSGGRNNTGRITSRRRG and AMNP…KASQ. A compositionally biased stretch (basic residues) spans 256-266; the sequence is TRTRNKNKASQ.

It belongs to the universal ribosomal protein uL2 family. In terms of assembly, part of the 50S ribosomal subunit. Forms a bridge to the 30S subunit in the 70S ribosome.

Its function is as follows. One of the primary rRNA binding proteins. Required for association of the 30S and 50S subunits to form the 70S ribosome, for tRNA binding and peptide bond formation. It has been suggested to have peptidyltransferase activity; this is somewhat controversial. Makes several contacts with the 16S rRNA in the 70S ribosome. This Ruegeria pomeroyi (strain ATCC 700808 / DSM 15171 / DSS-3) (Silicibacter pomeroyi) protein is Large ribosomal subunit protein uL2.